A 97-amino-acid polypeptide reads, in one-letter code: Serine protease inhibitor Kazal-type 14 (97 aa).

The signal sequence occupies residues 1-21; the sequence is MAKSFPVFSLLSFILIHLVLS. Positions 34–97 constitute a Kazal-like domain; the sequence is GIIKVKCPYE…RIRFYHDGKC (64 aa). 3 cysteine pairs are disulfide-bonded: C40-C79, C57-C76, and C65-C97. Residue N51 is glycosylated (N-linked (GlcNAc...) asparagine).

The protein resides in the secreted. Its function is as follows. May be a serine protease inhibitor. This Homo sapiens (Human) protein is Serine protease inhibitor Kazal-type 14 (SPINK14).